Consider the following 134-residue polypeptide: ATP synthase epsilon chain (134 aa).

It belongs to the ATPase epsilon chain family. In terms of assembly, F-type ATPases have 2 components, CF(1) - the catalytic core - and CF(0) - the membrane proton channel. CF(1) has five subunits: alpha(3), beta(3), gamma(1), delta(1), epsilon(1). CF(0) has three main subunits: a, b and c.

Its subcellular location is the cellular thylakoid membrane. In terms of biological role, produces ATP from ADP in the presence of a proton gradient across the membrane. The protein is ATP synthase epsilon chain of Prochlorococcus marinus (strain MIT 9312).